A 664-amino-acid chain; its full sequence is uncharacterized protein (664 aa).

An N-terminal signal peptide occupies residues 1–35 (MGVSVLTFHVSLFLKRILSIAFFLLSLSTLLRIVN). Residues Asn101 and Asn138 are each glycosylated (N-linked (GlcNAc...) asparagine). Sel1-like repeat units follow at residues 141-178 (AFAN…KQGS) and 179-214 (LDAH…DHLF). Asn221, Asn300, and Asn371 each carry an N-linked (GlcNAc...) asparagine glycan. 4 Sel1-like repeats span residues 337 to 372 (AQSC…TKND), 373 to 409 (SNSY…MNEN), 410 to 441 (PHAL…TQKS), and 442 to 477 (VISY…EAIR). Asn454 and Asn537 each carry an N-linked (GlcNAc...) asparagine glycan. Sel1-like repeat units follow at residues 564 to 599 (IDAI…EQSS) and 601 to 636 (GMGL…SNQN).

It belongs to the sel-1 family.

This is an uncharacterized protein from Schizosaccharomyces pombe (strain 972 / ATCC 24843) (Fission yeast).